Here is a 29-residue protein sequence, read N- to C-terminus: Scolopendra 8011.73 Da toxin (29 aa).

In terms of tissue distribution, expressed by the venom gland.

The protein resides in the secreted. The polypeptide is Scolopendra 8011.73 Da toxin (Scolopendra viridicornis nigra (Brazilian giant centipede)).